A 303-amino-acid chain; its full sequence is MADDQGCIEEQGVEDSANEDSVDAKPDRSSFVPSLFSKKKKNVTMRSIKTTRDRVPTYQYNMNFEKLGKCIIINNKNFDKVTGMGVRNGTDKDAEALFKCFRSLGFDVIVYNDCSCAKMQDLLKKASEEDHTNAACFACILLSHGEENVIYGKDGVTPIKDLTAHFRGDRCKTLLEKPKLFFIQACRGTELDDGIQADSGPINDTDANPRYKIPVEADFLFAYSTVPGYYSWRSPGRGSWFVQALCSILEEHGKDLEIMQILTRVNDRVARHFESQSDDPHFHEKKQIPCVVSMLTKELYFSQ.

Acidic residues predominate over residues 1–21 (MADDQGCIEEQGVEDSANEDS). Residues 1-30 (MADDQGCIEEQGVEDSANEDSVDAKPDRSS) form a disordered region. The residue at position 2 (A2) is an N-acetylalanine. Positions 2–23 (ADDQGCIEEQGVEDSANEDSVD) are cleaved as a propeptide — N-terminally processed. Phosphoserine; by PAK2 is present on S30. At S37 the chain carries Phosphoserine. The segment at 38 to 41 (KKKK) is exosite. The segment at 76 to 87 (KNFDKVTGMGVR) is loop L1. H144 is an active-site residue. T173 carries the post-translational modification Phosphothreonine; by PAK2. C186 is a catalytic residue. The loop L2 stretch occupies residues 187 to 196 (RGTELDDGIQ). Residues 199–206 (SGPINDTD) constitute a propeptide that is removed on maturation. Residues 226–238 (VPGYYSWRSPGRG) form a loop L3 region. Position 233 is a (Microbial infection) ADP-riboxanated arginine (R233). A Phosphoserine; by PAK2 modification is found at S239. The segment at 274-288 (ESQSDDPHFHEKKQI) is loop L4.

This sequence belongs to the peptidase C14A family. Heterotetramer that consists of two anti-parallel arranged heterodimers, each one formed by a 20 kDa (p20) and a 11 kDa (p11) subunit. Interacts with XIAP (via its second BIR domain); inhibiting CASP7 activity. Interacts with BIRC6/bruce. Interacts with ATXN3 (short isoform 1). Interacts with HSPA5. In terms of processing, cleavage by different proteases, such as granzyme B (GZMB), caspase-1 (CASP1), caspase-8 (CASP8), caspase-9 (CASP9) or caspase-10 (CASP10) generate the two active subunits. Its involvement in different programmed cell death processes is probably specified by the protease that activates CASP7. Cleaved and activated by initiator caspases (CASP8, CASP9 and/or CASP10), leading to execution phase of apoptosis. Cleavage and maturation by GZMB regulates granzyme-mediated programmed cell death. Cleaved and activated by CASP1 in response to bacterial infection. Propeptide domains can also be cleaved efficiently by CASP3. Active heterodimers between the small subunit of caspase-7 and the large subunit of CASP3, and vice versa, also occur. Also cleaved at the N-terminus at alternative sites by CAPN1, leading to its activation. Post-translationally, phosphorylation at Ser-30 and Ser-239 by PAK2 inhibits its activity. Phosphorylation at Ser-30 prevents cleavage and activation by initiator caspase CASP9, while phosphorylation at Ser-239 prevents thiol protease activity by preventing substrate-binding. (Microbial infection) ADP-riboxanation by C.violaceum CopC blocks CASP7 processing, preventing CASP7 activation and ability to recognize and cleave substrates. In terms of processing, ubiquitinated by BIRC6; this activity is inhibited by DIABLO/SMAC. As to expression, highly expressed in lung, skeletal muscle, liver, kidney, spleen and heart, and moderately in testis. No expression in the brain.

It is found in the cytoplasm. It localises to the cytosol. The protein localises to the nucleus. The protein resides in the secreted. Its subcellular location is the extracellular space. It carries out the reaction Strict requirement for an Asp residue at position P1 and has a preferred cleavage sequence of Asp-Glu-Val-Asp-|-.. With respect to regulation, during activation, the N-terminal disordered prodomain is removed by cleavage. Concomitantly, double cleavage gives rise to a large Caspase-7 subunit p20 and a small Caspase-7 subunit p11. The two large and two small subunits then assemble to form the active CASP7 complex. Can be cleaved and activated by different caspases, depending on the context. Cleaved and activated by initiator caspases (CASP8, CASP9 and/or CASP10), leading to execution phase of apoptosis. Inhibited by XIAP, which directly binds to the active site pocket and obstructs substrate entry. Cleavage and maturation by GZMB regulates granzyme-mediated programmed cell death. Cleavage and maturation by CASP1 regulates pyroptosis. Phosphorylation at Ser-30 and Ser-239 by PAK2 inhibits its activity. Inhibited by isatin sulfonamides. Inhibited by 2-(2,4-Dichlorophenoxy)- N-(2-mercapto-ethyl)-acetamide (DICA) and 5-Fluoro-1H-indole-2- carboxylic acid (2-mercapto-ethyl)-amide (FICA) allosteric inhibitors, which disrupt an interaction between Arg-187 and Tyr-223. Specifically inhibited by DARPin D7.18 and D7.43, which specifically bind to the precursor CASP7 and prevent its processing and activation. Inhibited by BIRC6; following inhibition of BIRC6-caspase binding by DIABLO/SMAC, BIRC6 is subjected to caspase cleavage, leading to an increase in active caspases. In terms of biological role, thiol protease involved in different programmed cell death processes, such as apoptosis, pyroptosis or granzyme-mediated programmed cell death, by proteolytically cleaving target proteins. Has a marked preference for Asp-Glu-Val-Asp (DEVD) consensus sequences, with some plasticity for alternate non-canonical sequences. Its involvement in the different programmed cell death processes is probably determined by upstream proteases that activate CASP7. Acts as an effector caspase involved in the execution phase of apoptosis: following cleavage and activation by initiator caspases (CASP8, CASP9 and/or CASP10), mediates execution of apoptosis by catalyzing cleavage of proteins, such as CLSPN, PARP1, PTGES3 and YY1. Compared to CASP3, acts as a minor executioner caspase and cleaves a limited set of target proteins. Acts as a key regulator of the inflammatory response in response to bacterial infection by catalyzing cleavage and activation of the sphingomyelin phosphodiesterase SMPD1 in the extracellular milieu, thereby promoting membrane repair. Regulates pyroptosis in intestinal epithelial cells: cleaved and activated by CASP1 in response to S.typhimurium infection, promoting its secretion to the extracellular milieu, where it catalyzes activation of SMPD1, generating ceramides that repair membranes and counteract the action of gasdermin-D (GSDMD) pores. Regulates granzyme-mediated programmed cell death in hepatocytes: cleaved and activated by granzyme B (GZMB) in response to bacterial infection, promoting its secretion to the extracellular milieu, where it catalyzes activation of SMPD1, generating ceramides that repair membranes and counteract the action of perforin (PRF1) pores. Following cleavage by CASP1 in response to inflammasome activation, catalyzes processing and inactivation of PARP1, alleviating the transcription repressor activity of PARP1. Acts as an inhibitor of type I interferon production during virus-induced apoptosis by mediating cleavage of antiviral proteins CGAS, IRF3 and MAVS, thereby preventing cytokine overproduction. Cleaves and activates sterol regulatory element binding proteins (SREBPs). Cleaves phospholipid scramblase proteins XKR4, XKR8 and XKR9. In case of infection, catalyzes cleavage of Kaposi sarcoma-associated herpesvirus protein ORF57, thereby preventing expression of viral lytic genes. Cleaves BIRC6 following inhibition of BIRC6-caspase binding by DIABLO/SMAC. Lacks enzymatic activity. The protein is Caspase-7 of Homo sapiens (Human).